The primary structure comprises 350 residues: Serine/arginine-rich splicing factor RS40 (350 aa).

RRM domains follow at residues 2–74 (KPVF…WTKS) and 97–168 (KTLF…YAVK). Basic and acidic residues-rich tracts occupy residues 73–82 (KSERGGDKRS) and 167–187 (VKDD…DRSP). Disordered regions lie at residues 73–94 (KSER…SSMR) and 167–350 (VKDD…PADE). S193, S195, and S211 each carry phosphoserine. Basic and acidic residues-rich tracts occupy residues 216 to 227 (YRKERTSPDYGR) and 240 to 255 (GSPE…DSPR). Phosphoserine occurs at positions 241, 262, 278, 298, 308, 335, and 340. Positions 272–289 (NKRERMSPNHSPFKKESP) are enriched in basic and acidic residues. A compositionally biased stretch (basic and acidic residues) spans 299-308 (PIERRERSRS).

Belongs to the splicing factor SR family. RS subfamily. As to quaternary structure, component of the spliceosome. Interacts with SNRNP35. Interacts with CYP59. Interacts with RCF3 and CPL1. Interacts with DRB1/HYL1 and SE. As to expression, highly expressed in roots and flowers. A presumably longer alternatively spliced form is found in leaves, stems and flowers.

Its subcellular location is the nucleus. The protein resides in the nucleus speckle. Required for constitutive and alternative pre-mRNA splicing. Involved in primary miRNA processing and pri-miRNA biogenesis. Binds both intronless and intron-containing pri-miRNAs. The chain is Serine/arginine-rich splicing factor RS40 (RS40) from Arabidopsis thaliana (Mouse-ear cress).